Consider the following 1076-residue polypeptide: MIVPIVLFLTLCPSELSAWGSPGDPIVCGVRTETNKSIQIEWKEGRSEKLCQIDRLGHVTSWLRNHSSFQGLIGQVKGRPSVSYFPEGASYPRWSGLLSPCDAEWLGLIAVSKAGDTDMIVPGPTYKGKIFVERPTYNGYKGWGCADGKSLSHSGTYCETDSSVSSGLIQGDRVLWVGEVVCQRGTPVPEDVFSELVSLSQSEFPDVCKIDGVALNQCEQESIPQPLDVAWIDVGRSHKVLMREHKTKWVQESSAKDFVCFKVGQGPCSKQEEDDCMSKGNCHGDEVFCRMAGCSARMQDNQEGCRCELLQKPGEIIVNYGGVSVRPTCYGFSRMMATLEVHKPDRELTGCTGCHLECIEGGVKIVTLTSELRSATVCASHFCASAKGGSKTTDILFHTGALVGPNSIRITGQLLDGSKFSFDGHCIFPDGCMALDCTFCKEFLRNPQCYPVKKWLFLVVVIMCCYCALMLLTNILRAIGVWGTWVFAPIKLALALGLRLAKLSKKGLVAVVTRGQMIVNDELHQVRVERGEQNEGRQGYGPRGPIRHWLYSPALILILTTSICSGCDELVHAESKSITCKSASGNEKECSVTGRALLPAVNPGQEACLHFSVPGSPDSKCLKIKVKSINLRCKQASSYYVPEAKARCTSVRRCRWAGDCQSGCPTYFSSNSFSDDWANRMDRAGLGMSGCSDGCGGAACGCFNAAPSCIFWRKWVENPSNRVWKVSPCASWVLAATIELTLPSGEVKTLEPVTGQATQMFKGVAITYLGSSIEIVGMTRLCEMKEMGTGIMALAPCNDPGHAIMGNVGEIQCSSIESAKHIRSDGCIWNADLVGIELRVDDAVCFSKLTSVEAVANFSKIPATISGVRFDQGNHGESRIYGSPLDITRVSGEFSVSFRGMRLKLSEISASCTGEITNVSGCYSCMTGASVSIKLHSSKNTTGHLKCDSDETAFSVMEGTHTYRPHMSFDKAVIDEECVLNCGGHSSKLLLKGSLVFMDVPRFVDGSYVQTYHSKVPAGGRVPNPVDWLNALFGDGITRWILGIIGVLLACVMLFVVVVAITRRLIKGLTQRAKVA.

An N-terminal signal peptide occupies residues 1–18; the sequence is MIVPIVLFLTLCPSELSA. The Lumenal segment spans residues 19–455; sequence WGSPGDPIVC…NPQCYPVKKW (437 aa). Intrachain disulfides connect C28/C51, C145/C158, C182/C329, C208/C218, C260/C307, C289/C294, C351/C354, C358/C426, and C378/C383. The helical transmembrane segment at 456–476 threads the bilayer; that stretch reads LFLVVVIMCCYCALMLLTNIL. The golgi retention signal stretch occupies residues 477–523; that stretch reads RAIGVWGTWVFAPIKLALALGLRLAKLSKKGLVAVVTRGQMIVNDEL. At 477–539 the chain is on the cytoplasmic side; that stretch reads RAIGVWGTWV…RGEQNEGRQG (63 aa). An internal signal sequence for glycoprotein C region spans residues 544-566; it reads GPIRHWLYSPALILILTTSICSG. Cystine bridges form between C567–C608, C580–C590, C633–C729, C648–C845, C654–C702, C660–C709, C664–C691, C695–C700, C782–C797, and C813–C827. Residues 567 to 1040 lie on the Lumenal side of the membrane; the sequence is CDELVHAESK…ALFGDGITRW (474 aa). The tract at residues 654–660 is fusion loop; sequence CRWAGDC. Residues 695–709 are fusion loop; it reads CGGAACGCFNAAPSC. 2 N-linked (GlcNAc...) asparagine; by host glycosylation sites follow: N857 and N918. 2 disulfide bridges follow: C912-C982 and C922-C925. Residue N940 is glycosylated (N-linked (GlcNAc...) asparagine; by host). Residues 1041–1061 traverse the membrane as a helical segment; the sequence is ILGIIGVLLACVMLFVVVVAI. The Cytoplasmic segment spans residues 1062-1076; the sequence is TRRLIKGLTQRAKVA.

The protein belongs to the phlebovirus envelope glycoprotein family. In terms of assembly, heterodimer with glycoprotein C. As to quaternary structure, heterodimer with glycoprotein N. Homotrimer (postfusion). Post-translationally, specific enzymatic cleavages in vivo yield mature proteins Glycoprotein C, and Glycoprotein N. Glycosylated. In terms of processing, palmitoylated.

Its subcellular location is the virion membrane. The protein localises to the host Golgi apparatus membrane. It localises to the host endoplasmic reticulum membrane. In terms of biological role, structural component of the virion that interacts with glycoprotein C. It shields the hydrophobic fusion loops of the glycoprotein C, preventing premature fusion. The glycoprotein protrusions are arranged on an icosahedral lattice, with T=12 triangulation. They are able to attach the virion to the host cell receptor CD209/DC-SIGN and to promote fusion of membranes with the late endosome after endocytosis of the virion. Plays a role in the packaging of ribonucleoproteins during virus assembly. Functionally, structural component of the virion that interacts with glycoprotein N. Acts as a class II fusion protein that is activated upon acidification and subsequent repositioning of the glycoprotein N. The glycoprotein protrusions are arranged on an icosahedral lattice, with T=12 triangulation. They are able to attach the virion to the host cell receptor CD209/DC-SIGN and to promote fusion of membranes with the late endosome after endocytosis of the virion. The protein is Envelopment polyprotein (GP) of Alces americanus (American moose).